Here is a 381-residue protein sequence, read N- to C-terminus: E3 ubiquitin-protein ligase KCMF1 (381 aa).

N-acetylserine is present on S2. S2 is modified (phosphoserine). A ZZ-type zinc finger spans residues 4–60; sequence HEGVSCDACLKGNFRGRRYKCLICYDYDLCASCYESGATTTRHTTDHPMQCILTRVD. 8 residues coordinate Zn(2+): C9, C12, C24, C27, C33, C36, H46, and H50. The segment at 78-101 adopts a C2H2-type zinc-finger fold; sequence FTCPYCGKMGYTETSLQEHVTSEH. The tract at residues 154 to 193 is disordered; that stretch reads MFHPGRGLGGPRARRSNMHFTSSSTGGLSSSQSSYSPSNR. Phosphoserine is present on residues S169, S189, and S212. Low complexity predominate over residues 175–191; that stretch reads SSSTGGLSSSQSSYSPS. Residues 225 to 257 are a coiled coil; that stretch reads SQLQQLQMQLQLERQHAQAARQQLETARNATRR. The interval 294 to 314 is disordered; the sequence is TRLNDPKMSETERQSMESERA. Residues 297-314 show a composition bias toward basic and acidic residues; the sequence is NDPKMSETERQSMESERA. Residues S335 and S336 each carry the phosphoserine modification.

Belongs to the KCMF1 family. As to quaternary structure, component of the SIFI complex, composed of KCMF1, UBR4 and calmodulin (CALM1, CALM2 or CALM3). Spleen, small intestine, ovary, peripheral blood, lung, kidney and pancreas. Expressed at low levels in the thymus, prostate, testis, colon, heart, brain, placenta and liver.

It localises to the cytoplasm. It is found in the late endosome. The protein resides in the lysosome. The enzyme catalyses S-ubiquitinyl-[E2 ubiquitin-conjugating enzyme]-L-cysteine + [acceptor protein]-L-lysine = [E2 ubiquitin-conjugating enzyme]-L-cysteine + N(6)-ubiquitinyl-[acceptor protein]-L-lysine.. The protein operates within protein modification; protein ubiquitination. Functionally, E3 ubiquitin-protein ligase which accepts ubiquitin from an E2 ubiquitin-conjugating enzyme and then transfers it to targeted substrates, promoting their degradation by the proteasome. Together with UBR4, component of the N-end rule pathway: ubiquitinates proteins bearing specific N-terminal residues that are destabilizing according to the N-end rule, leading to their degradation. Does not ubiquitinate proteins that are acetylated at the N-terminus. Together with UBR4, part of a protein quality control pathway that catalyzes ubiquitination and degradation of proteins that have been oxidized in response to reactive oxygen species (ROS): recognizes proteins with an Arg-CysO3(H) degron at the N-terminus, and mediates assembly of heterotypic 'Lys-63'-/'Lys-27'-linked branched ubiquitin chains on oxidized proteins, leading to their degradation by autophagy. Catalytic component of the SIFI complex, a multiprotein complex required to inhibit the mitochondrial stress response after a specific stress event has been resolved: ubiquitinates and degrades (1) components of the HRI-mediated signaling of the integrated stress response, such as DELE1 and EIF2AK1/HRI, as well as (2) unimported mitochondrial precursors. Within the SIFI complex, UBR4 initiates ubiquitin chain that are further elongated or branched by KCMF1. The polypeptide is E3 ubiquitin-protein ligase KCMF1 (Homo sapiens (Human)).